A 98-amino-acid chain; its full sequence is NADH-ubiquinone oxidoreductase chain 4L (98 aa).

The next 3 helical transmembrane spans lie at 1-21, 29-49, and 61-81; these read MSLI…GLLM, ALLC…LTIL, and IILL…LVMI.

This sequence belongs to the complex I subunit 4L family. As to quaternary structure, core subunit of respiratory chain NADH dehydrogenase (Complex I) which is composed of 45 different subunits.

It localises to the mitochondrion inner membrane. The catalysed reaction is a ubiquinone + NADH + 5 H(+)(in) = a ubiquinol + NAD(+) + 4 H(+)(out). Core subunit of the mitochondrial membrane respiratory chain NADH dehydrogenase (Complex I) which catalyzes electron transfer from NADH through the respiratory chain, using ubiquinone as an electron acceptor. Part of the enzyme membrane arm which is embedded in the lipid bilayer and involved in proton translocation. This Berardius bairdii (Baird's beaked whale) protein is NADH-ubiquinone oxidoreductase chain 4L (MT-ND4L).